Consider the following 254-residue polypeptide: Imidazole glycerol phosphate synthase subunit HisF (254 aa).

Catalysis depends on residues Asp12 and Asp131.

The protein belongs to the HisA/HisF family. As to quaternary structure, heterodimer of HisH and HisF.

It is found in the cytoplasm. The enzyme catalyses 5-[(5-phospho-1-deoxy-D-ribulos-1-ylimino)methylamino]-1-(5-phospho-beta-D-ribosyl)imidazole-4-carboxamide + L-glutamine = D-erythro-1-(imidazol-4-yl)glycerol 3-phosphate + 5-amino-1-(5-phospho-beta-D-ribosyl)imidazole-4-carboxamide + L-glutamate + H(+). It participates in amino-acid biosynthesis; L-histidine biosynthesis; L-histidine from 5-phospho-alpha-D-ribose 1-diphosphate: step 5/9. Its function is as follows. IGPS catalyzes the conversion of PRFAR and glutamine to IGP, AICAR and glutamate. The HisF subunit catalyzes the cyclization activity that produces IGP and AICAR from PRFAR using the ammonia provided by the HisH subunit. This is Imidazole glycerol phosphate synthase subunit HisF from Desulfitobacterium hafniense (strain Y51).